A 726-amino-acid chain; its full sequence is PWWP domain-containing protein 2 (726 aa).

Positions 1–10 (MSTESERIES) are enriched in basic and acidic residues. The segment at 1 to 26 (MSTESERIESVSEANASSLEVGNDQM) is disordered. Polar residues predominate over residues 12–26 (SEANASSLEVGNDQM). The PWWP domain maps to 199-260 (DSDLVWAKVR…ASRIKPFRQH (62 aa)). The segment at 392-441 (APKISPAEEQSSLVEVSDPEPTKSKQVYTKRRKTNLQTEQSSLVEVSDPD) is disordered. The segment covering 426-435 (NLQTEQSSLV) has biased composition (polar residues). 2 short sequence motifs (nuclear localization signal) span residues 460–467 (KKKEKTLA) and 495–502 (KKRKVVQS). 2 disordered regions span residues 472-545 (EKRV…PQKA) and 568-726 (TRLL…VSAE). The span at 494–512 (EKKRKVVQSKVPKSTKKIK) shows a compositional bias: basic residues. A compositionally biased stretch (polar residues) spans 606 to 634 (SPSTTLSSPHAASVTKTTSGKSNSVSLDH). Positions 658-688 (LESRDLKDSSKEQVVHEDKKEAANVADEKSI) are enriched in basic and acidic residues.

The protein belongs to the PDP family. Interacts with DEK3. Binds to MSI4/FVE and MSI5. Component of the PRC2 (polycomb repressive complex 2) complex which regulates histone methylation on histone H3K27.

It localises to the nucleus. Functionally, together with PDP1, PDP3 and PDP6, interacts with MSI4/FVE and MSI5 to suppress FLC, MAF4 and MAF5 expression by regulating the function of the PRC2 complex and modulating H3K27me3 level, thereby promoting flowering. The sequence is that of PWWP domain-containing protein 2 from Arabidopsis thaliana (Mouse-ear cress).